The chain runs to 890 residues: Protein translocase subunit SecA (890 aa).

ATP-binding positions include Gln-85, Gly-103 to Thr-107, and Asp-491.

It belongs to the SecA family. As to quaternary structure, monomer and homodimer. Part of the essential Sec protein translocation apparatus which comprises SecA, SecYEG and auxiliary proteins SecDF. Other proteins may also be involved.

It is found in the cell membrane. Its subcellular location is the cytoplasm. The catalysed reaction is ATP + H2O + cellular proteinSide 1 = ADP + phosphate + cellular proteinSide 2.. In terms of biological role, part of the Sec protein translocase complex. Interacts with the SecYEG preprotein conducting channel. Has a central role in coupling the hydrolysis of ATP to the transfer of proteins into and across the cell membrane, serving as an ATP-driven molecular motor driving the stepwise translocation of polypeptide chains across the membrane. This is Protein translocase subunit SecA from Mycoplasmoides gallisepticum (strain R(low / passage 15 / clone 2)) (Mycoplasma gallisepticum).